The sequence spans 488 residues: Annexin A7 (488 aa).

A compositionally biased stretch (pro residues) spans 1-18; it reads MSYPGYPPTGYPPFPGYP. Disordered regions lie at residues 1 to 49 and 71 to 150; these read MSYP…YPQV and GYPG…NTES. Residues 1-143 are repeat-rich region; sequence MSYPGYPPTG…QYPGGQPTYP (143 aa). Positions 5-20 are 3 X 5 AA tandem repeats of G-Y-P-P-X; it reads GYPPTGYPPFPGYPPA. Over residues 89–102 the composition is skewed to gly residues; sequence PGQGFGVPPGGAGF. Annexin repeat units follow at residues 185 to 256, 257 to 328, 340 to 412, and 416 to 487; these read FDAM…ALFM, PPTY…SMCQ, QMAQ…TILQ, and NRPA…AIVG. N6-acetyllysine is present on Lys233.

Belongs to the annexin family. As to quaternary structure, interacts with PDCD6.

Functionally, calcium/phospholipid-binding protein which promotes membrane fusion and is involved in exocytosis. This is Annexin A7 (ANXA7) from Macaca fascicularis (Crab-eating macaque).